Consider the following 381-residue polypeptide: Alkanesulfonate monooxygenase (381 aa).

It belongs to the SsuD family. Homotetramer.

The enzyme catalyses an alkanesulfonate + FMNH2 + O2 = an aldehyde + FMN + sulfite + H2O + 2 H(+). Catalyzes the desulfonation of aliphatic sulfonates. The protein is Alkanesulfonate monooxygenase of Shigella flexneri.